The chain runs to 316 residues: Nautilin-63 (316 aa).

4 disordered regions span residues 1 to 26, 149 to 173, 189 to 238, and 259 to 278; these read IPDL…GPRG, PFPT…VTPF, DSRC…GIAS, and PPTS…GLNK. Over residues 10–26 the composition is skewed to low complexity; sequence TLPVLTKGPTGLLGPRG. Polar residues-rich tracts occupy residues 152-163, 207-216, and 269-278; these read TSRSTYGPSGSQ, GHSSPATLNS, and SGYTSDGLNK.

Post-translationally, glycosylated; contains mainly glucose, galactose, galactosamine, glucosamine and glucuronic acid. As to expression, component of the acid-soluble organic matrix of nacreous shell layers (at protein level).

The protein localises to the secreted. Functionally, involved in nacre formation. Affects morphology of calcite crystals in vitro but does not inhibit their formation. Binds chitin. The polypeptide is Nautilin-63 (Nautilus macromphalus (Bellybutton nautilus)).